Consider the following 118-residue polypeptide: Ribonuclease P protein component (118 aa).

Belongs to the RnpA family. As to quaternary structure, consists of a catalytic RNA component (M1 or rnpB) and a protein subunit.

The catalysed reaction is Endonucleolytic cleavage of RNA, removing 5'-extranucleotides from tRNA precursor.. In terms of biological role, RNaseP catalyzes the removal of the 5'-leader sequence from pre-tRNA to produce the mature 5'-terminus. It can also cleave other RNA substrates such as 4.5S RNA. The protein component plays an auxiliary but essential role in vivo by binding to the 5'-leader sequence and broadening the substrate specificity of the ribozyme. The protein is Ribonuclease P protein component of Shewanella sp. (strain ANA-3).